A 421-amino-acid chain; its full sequence is Gamma-glutamyl phosphate reductase (421 aa).

Belongs to the gamma-glutamyl phosphate reductase family.

The protein localises to the cytoplasm. It catalyses the reaction L-glutamate 5-semialdehyde + phosphate + NADP(+) = L-glutamyl 5-phosphate + NADPH + H(+). It functions in the pathway amino-acid biosynthesis; L-proline biosynthesis; L-glutamate 5-semialdehyde from L-glutamate: step 2/2. Catalyzes the NADPH-dependent reduction of L-glutamate 5-phosphate into L-glutamate 5-semialdehyde and phosphate. The product spontaneously undergoes cyclization to form 1-pyrroline-5-carboxylate. The protein is Gamma-glutamyl phosphate reductase of Stutzerimonas stutzeri (strain A1501) (Pseudomonas stutzeri).